Consider the following 249-residue polypeptide: Phosphomannomutase 1 (249 aa).

Catalysis depends on D12, which acts as the Nucleophile. Positions 12 and 14 each coordinate Mg(2+). D14 acts as the Proton donor/acceptor in catalysis. The alpha-D-mannose 1-phosphate site is built by R21, R123, R134, R141, S179, and D181. D209, D223, and T227 together coordinate Mg(2+).

The protein belongs to the eukaryotic PMM family. As to quaternary structure, homodimer.

The protein localises to the cytoplasm. It carries out the reaction alpha-D-mannose 1-phosphate = D-mannose 6-phosphate. It functions in the pathway nucleotide-sugar biosynthesis; GDP-alpha-D-mannose biosynthesis; alpha-D-mannose 1-phosphate from D-fructose 6-phosphate: step 2/2. Involved in the synthesis of the GDP-mannose and dolichol-phosphate-mannose required for a number of critical mannosyl transfer reactions. The polypeptide is Phosphomannomutase 1 (pmmA) (Dictyostelium discoideum (Social amoeba)).